We begin with the raw amino-acid sequence, 229 residues long: Uracil-DNA glycosylase (229 aa).

Asp71 acts as the Proton acceptor in catalysis.

The protein belongs to the uracil-DNA glycosylase (UDG) superfamily. UNG family.

The protein resides in the cytoplasm. It catalyses the reaction Hydrolyzes single-stranded DNA or mismatched double-stranded DNA and polynucleotides, releasing free uracil.. Its function is as follows. Excises uracil residues from the DNA which can arise as a result of misincorporation of dUMP residues by DNA polymerase or due to deamination of cytosine. In Campylobacter lari (strain RM2100 / D67 / ATCC BAA-1060), this protein is Uracil-DNA glycosylase.